The following is a 587-amino-acid chain: 2-succinyl-5-enolpyruvyl-6-hydroxy-3-cyclohexene-1-carboxylate synthase (587 aa).

This sequence belongs to the TPP enzyme family. MenD subfamily. As to quaternary structure, homodimer. The cofactor is Mg(2+). Mn(2+) is required as a cofactor. Requires thiamine diphosphate as cofactor.

The enzyme catalyses isochorismate + 2-oxoglutarate + H(+) = 5-enolpyruvoyl-6-hydroxy-2-succinyl-cyclohex-3-ene-1-carboxylate + CO2. It functions in the pathway quinol/quinone metabolism; 1,4-dihydroxy-2-naphthoate biosynthesis; 1,4-dihydroxy-2-naphthoate from chorismate: step 2/7. It participates in cofactor biosynthesis; phylloquinone biosynthesis. Its function is as follows. Catalyzes the thiamine diphosphate-dependent decarboxylation of 2-oxoglutarate and the subsequent addition of the resulting succinic semialdehyde-thiamine pyrophosphate anion to isochorismate to yield 2-succinyl-5-enolpyruvyl-6-hydroxy-3-cyclohexene-1-carboxylate (SEPHCHC). The polypeptide is 2-succinyl-5-enolpyruvyl-6-hydroxy-3-cyclohexene-1-carboxylate synthase (Prochlorococcus marinus (strain MIT 9215)).